A 201-amino-acid chain; its full sequence is Holliday junction branch migration complex subunit RuvA (201 aa).

The interval 1–64 (MIGRLRGTLA…EDAHLLYGFA (64 aa)) is domain I. Positions 65–143 (EKRERELFRE…AWENMPTIAP (79 aa)) are domain II. A flexible linker region spans residues 144–152 (LVMEPRASA). The segment at 153–201 (TVSSAEADAVSALIALGFKPQEASRAVAAVPGEDLSSEEMIRQALKGMV) is domain III.

Belongs to the RuvA family. In terms of assembly, homotetramer. Forms an RuvA(8)-RuvB(12)-Holliday junction (HJ) complex. HJ DNA is sandwiched between 2 RuvA tetramers; dsDNA enters through RuvA and exits via RuvB. An RuvB hexamer assembles on each DNA strand where it exits the tetramer. Each RuvB hexamer is contacted by two RuvA subunits (via domain III) on 2 adjacent RuvB subunits; this complex drives branch migration. In the full resolvosome a probable DNA-RuvA(4)-RuvB(12)-RuvC(2) complex forms which resolves the HJ.

It is found in the cytoplasm. In terms of biological role, the RuvA-RuvB-RuvC complex processes Holliday junction (HJ) DNA during genetic recombination and DNA repair, while the RuvA-RuvB complex plays an important role in the rescue of blocked DNA replication forks via replication fork reversal (RFR). RuvA specifically binds to HJ cruciform DNA, conferring on it an open structure. The RuvB hexamer acts as an ATP-dependent pump, pulling dsDNA into and through the RuvAB complex. HJ branch migration allows RuvC to scan DNA until it finds its consensus sequence, where it cleaves and resolves the cruciform DNA. This is Holliday junction branch migration complex subunit RuvA from Pseudomonas aeruginosa (strain LESB58).